The chain runs to 44 residues: Photosystem I reaction center subunit IX (44 aa).

A helical transmembrane segment spans residues 7-27 (YLSVAPVLSTLWFGSLAGLLI).

This sequence belongs to the PsaJ family.

Its subcellular location is the plastid. It is found in the chloroplast thylakoid membrane. In terms of biological role, may help in the organization of the PsaE and PsaF subunits. This Arabis hirsuta (Hairy rock-cress) protein is Photosystem I reaction center subunit IX.